A 181-amino-acid polypeptide reads, in one-letter code: Inner membrane-spanning protein YciB (181 aa).

5 helical membrane-spanning segments follow: residues 24–44, 49–69, 81–101, 119–139, and 149–169; these read SATA…WLRH, NMLW…LILQ, LYWL…KNLI, LNIS…YVAY, and FKLF…ALLL.

This sequence belongs to the YciB family.

It localises to the cell inner membrane. Plays a role in cell envelope biogenesis, maintenance of cell envelope integrity and membrane homeostasis. The sequence is that of Inner membrane-spanning protein YciB from Nitrosomonas eutropha (strain DSM 101675 / C91 / Nm57).